The sequence spans 514 residues: Histidine ammonia-lyase (514 aa).

Positions 147-149 (ASG) form a cross-link, 5-imidazolinone (Ala-Gly). Serine 148 is modified (2,3-didehydroalanine (Ser)).

The protein belongs to the PAL/histidase family. Contains an active site 4-methylidene-imidazol-5-one (MIO), which is formed autocatalytically by cyclization and dehydration of residues Ala-Ser-Gly.

It localises to the cytoplasm. It catalyses the reaction L-histidine = trans-urocanate + NH4(+). The protein operates within amino-acid degradation; L-histidine degradation into L-glutamate; N-formimidoyl-L-glutamate from L-histidine: step 1/3. This Gloeobacter violaceus (strain ATCC 29082 / PCC 7421) protein is Histidine ammonia-lyase.